The chain runs to 389 residues: Sulfate adenylyltransferase (389 aa).

This sequence belongs to the sulfate adenylyltransferase family.

It catalyses the reaction sulfate + ATP + H(+) = adenosine 5'-phosphosulfate + diphosphate. Its pathway is sulfur metabolism; hydrogen sulfide biosynthesis; sulfite from sulfate: step 1/3. The sequence is that of Sulfate adenylyltransferase from Hyperthermus butylicus (strain DSM 5456 / JCM 9403 / PLM1-5).